Reading from the N-terminus, the 390-residue chain is Uroporphyrinogen decarboxylase 2, chloroplastic (390 aa).

The transit peptide at 1–30 directs the protein to the chloroplast; that stretch reads MATACPPLSLQPAYLSGRSARARRPPPAVR. Residues 70–74, Phe-89, Ser-119, Asp-120, Tyr-197, Ser-252, and His-367 contribute to the substrate site; that span reads RQAGR.

The protein belongs to the uroporphyrinogen decarboxylase family. In terms of assembly, homodimer.

It localises to the plastid. The protein localises to the chloroplast. It carries out the reaction uroporphyrinogen III + 4 H(+) = coproporphyrinogen III + 4 CO2. The protein operates within porphyrin-containing compound metabolism; protoporphyrin-IX biosynthesis; coproporphyrinogen-III from 5-aminolevulinate: step 4/4. Functionally, catalyzes the decarboxylation of four acetate groups of uroporphyrinogen-III to yield coproporphyrinogen-III. The sequence is that of Uroporphyrinogen decarboxylase 2, chloroplastic from Oryza sativa subsp. japonica (Rice).